A 1461-amino-acid chain; its full sequence is Neogenin (1461 aa).

The first 33 residues, 1-33 (MAAERGARRLLSTPSFWLYCLLLLGRRAPGAAA), serve as a signal peptide directing secretion. Residues 34 to 1105 (ARSGSAPQSP…PTSPLDSNML (1072 aa)) lie on the Extracellular side of the membrane. Ig-like C2-type domains lie at 52–141 (PFYF…TIIS), 152–238 (PRFT…VELK), 243–336 (PEVI…AELT), and 341–426 (PEFL…AQLI). Asparagine 73 carries N-linked (GlcNAc...) asparagine glycosylation. 3 disulfide bridges follow: cysteine 74–cysteine 129, cysteine 173–cysteine 221, and cysteine 270–cysteine 320. Asparagine 210 carries an N-linked (GlcNAc...) asparagine glycan. Asparagine 326 is a glycosylation site (N-linked (GlcNAc...) asparagine). The cysteines at positions 362 and 410 are disulfide-linked. 6 Fibronectin type-III domains span residues 441–535 (APRD…TQPE), 541–631 (PAPN…TLSD), 636–731 (APQN…TFES), 741–831 (VPSS…RPHT), 856–952 (PPVG…TFEL), and 957–1054 (PPKD…TPKA). Asparagine 470 and asparagine 489 each carry an N-linked (GlcNAc...) asparagine glycan. Asparagine 639 and asparagine 715 each carry an N-linked (GlcNAc...) asparagine glycan. Asparagine 909 is a glycosylation site (N-linked (GlcNAc...) asparagine). The interval 1041–1097 (GPMSEAVQFRTPKADSSDKMPNDQASGSGGKGSRLPDLGSDYKPPMSGSNSPHGSPT) is disordered. Residues 1052 to 1061 (PKADSSDKMP) show a composition bias toward basic and acidic residues. Over residues 1087–1097 (SGSNSPHGSPT) the composition is skewed to polar residues. The chain crosses the membrane as a helical span at residues 1106-1126 (LVIIVSVGVITIVVVVIIAVF). Residues 1127-1461 (CTRRTTSHQK…MKDLNAITTA (335 aa)) are Cytoplasmic-facing. 4 disordered regions span residues 1138–1160 (KRAA…DVKP), 1174–1206 (PIDK…SMDS), 1235–1276 (PKMM…PARS), and 1289–1381 (TSMS…ALPS). A phosphoserine mark is found at serine 1178 and serine 1194. Residues 1191-1206 (PRNSQDITPVDNSMDS) show a composition bias toward polar residues. Position 1198 is a phosphothreonine (threonine 1198). Polar residues-rich tracts occupy residues 1289–1322 (TSMS…TCCT) and 1330–1349 (ATSS…QSLP). A compositionally biased stretch (pro residues) spans 1366 to 1375 (AIPPPGPPTY). At serine 1401 the chain carries Phosphoserine. The residue at position 1404 (threonine 1404) is a Phosphothreonine. 3 positions are modified to phosphoserine: serine 1432, serine 1434, and serine 1435.

The protein belongs to the immunoglobulin superfamily. DCC family. As to quaternary structure, interacts with MYO10. Interacts with RGMA and RGMB. Interacts with BMP2, BMP4, BMP6, and BMP7. As to expression, widely expressed and also in cancer cell lines.

The protein localises to the cell membrane. Its function is as follows. Multi-functional cell surface receptor regulating cell adhesion in many diverse developmental processes, including neural tube and mammary gland formation, myogenesis and angiogenesis. Receptor for members of the BMP, netrin, and repulsive guidance molecule (RGM) families. Netrin-Neogenin interactions result in a chemoattractive axon guidance response and cell-cell adhesion, the interaction between NEO1/Neogenin and RGMa and RGMb induces a chemorepulsive response. The sequence is that of Neogenin (NEO1) from Homo sapiens (Human).